A 436-amino-acid polypeptide reads, in one-letter code: Aminopeptidase C (436 aa).

Catalysis depends on residues Cys68, His356, and Asn378.

This sequence belongs to the peptidase C1 family. In terms of assembly, homohexamer.

It catalyses the reaction Inactivates bleomycin B2 (a cytotoxic glycometallopeptide) by hydrolysis of a carboxyamide bond of beta-aminoalanine, but also shows general aminopeptidase activity. The specificity varies somewhat with source, but amino acid arylamides of Met, Leu and Ala are preferred.. In terms of biological role, hydrolyzes naphthylamide-substituted amino acids as well as di- and tripeptides in which the half-cystine residue is involved in a disulfide loop, notably in oxytocin and vasopressin. Also has a bleomycin hydrolase activity. The chain is Aminopeptidase C (pepC) from Lactococcus lactis subsp. lactis (strain IL1403) (Streptococcus lactis).